Consider the following 219-residue polypeptide: Protein matrimony (219 aa).

Residues 74–99 (PPAKAHPHPHQHQHHHHHHKHIHRTQ) show a composition bias toward basic residues. The tract at residues 74 to 104 (PPAKAHPHPHQHQHHHHHHKHIHRTQLKPPP) is disordered. The 61-residue stretch at 159–219 (NHAANVEQIL…NRIMDVLQTL (61 aa)) folds into the SAM domain.

In terms of assembly, interacts with polo. Interacts with cort. Post-translationally, probably ubiquitinated: degraded during the oocyte-to-embryo transition by the anaphase promoting complex/cyclosome (APC/C) containing cort protein.

It is found in the nucleus. The protein resides in the chromosome. In terms of biological role, polo kinase inhibitor required to maintain G2 arrest in the meiotic cell cycle in females. Holds heterochromatically paired homologs together from the end of pachytene until metaphase I. Haploinsufficient locus for homologous achiasmate segregation and may be required for the maintenance of heterochromatic pairings. The sequence is that of Protein matrimony (mtrm) from Drosophila yakuba (Fruit fly).